Consider the following 201-residue polypeptide: Small ribosomal subunit protein uS4 (201 aa).

Positions 1–46 are disordered; that stretch reads MARYTGPRSRISRRFGEPVMGDSKALQKKNYAPGMHGRNKKRKQSE. One can recognise an S4 RNA-binding domain in the interval 92–151; the sequence is ARLDNTVYRLGIASSRRAARQLVIHKHIVVNGDVVNIPSYQLKPGDQLGVREKSKSIEAI.

The protein belongs to the universal ribosomal protein uS4 family. As to quaternary structure, part of the 30S ribosomal subunit. Contacts protein S5. The interaction surface between S4 and S5 is involved in control of translational fidelity.

Its function is as follows. One of the primary rRNA binding proteins, it binds directly to 16S rRNA where it nucleates assembly of the body of the 30S subunit. With S5 and S12 plays an important role in translational accuracy. In Cytophaga hutchinsonii (strain ATCC 33406 / DSM 1761 / CIP 103989 / NBRC 15051 / NCIMB 9469 / D465), this protein is Small ribosomal subunit protein uS4.